The following is a 121-amino-acid chain: NAD(P)H-quinone oxidoreductase subunit 3, chloroplastic (121 aa).

3 helical membrane-spanning segments follow: residues 10-30 (FFIF…ISKF), 65-85 (MFAL…PWAM), and 90-110 (LGLS…IGLV).

The protein belongs to the complex I subunit 3 family. As to quaternary structure, NDH is composed of at least 16 different subunits, 5 of which are encoded in the nucleus.

It is found in the plastid. The protein resides in the chloroplast thylakoid membrane. The catalysed reaction is a plastoquinone + NADH + (n+1) H(+)(in) = a plastoquinol + NAD(+) + n H(+)(out). It carries out the reaction a plastoquinone + NADPH + (n+1) H(+)(in) = a plastoquinol + NADP(+) + n H(+)(out). NDH shuttles electrons from NAD(P)H:plastoquinone, via FMN and iron-sulfur (Fe-S) centers, to quinones in the photosynthetic chain and possibly in a chloroplast respiratory chain. The immediate electron acceptor for the enzyme in this species is believed to be plastoquinone. Couples the redox reaction to proton translocation, and thus conserves the redox energy in a proton gradient. The protein is NAD(P)H-quinone oxidoreductase subunit 3, chloroplastic of Physcomitrium patens (Spreading-leaved earth moss).